A 1232-amino-acid chain; its full sequence is Anoctamin-8 (1232 aa).

Residues 1 to 32 (MAEAASGAGGTSLEGERGKRPPPEGEPAAPAS) are disordered. An N-acetylalanine modification is found at Ala2. At 2 to 244 (AEAASGAGGT…DDICDYFGVK (243 aa)) the chain is on the extracellular side. A compositionally biased stretch (basic and acidic residues) spans 14–23 (EGERGKRPPP). Residues 245 to 265 (IAMYFAWLGFYTSAMVYPAVF) traverse the membrane as a helical segment. Over 266–281 (GSVLYTFTEADQTSRD) the chain is Cytoplasmic. A helical membrane pass occupies residues 282-302 (VSCVVFALFNVIWSTLFLEEW). Residues 303 to 356 (KRRGAELAYKWGTLDSPGEAVEEPRPQFRGVRRISPITRAEEFYYPPWKRLLFQ) are Extracellular-facing. Ser318 bears the Phosphoserine mark. The chain crosses the membrane as a helical span at residues 357–377 (LLVSLPLCLACLVCVFLLMLG). At 378–400 (CFQLQELVLSVKGLPRLARFLPK) the chain is on the cytoplasmic side. The chain crosses the membrane as a helical span at residues 401–421 (VMLALLVSVSAEGYKKLAIWL). The Extracellular portion of the chain corresponds to 422-437 (NDMENYRLESAYEKHL). Residues 438 to 458 (IIKVVLFQFVNSYLSLFYIGF) traverse the membrane as a helical segment. Residues 459 to 750 (YLKDMERLKE…YEDTFQDYQE (292 aa)) are Cytoplasmic-facing. The disordered stretch occupies residues 524-650 (RRLEPQADEG…SPTMVEKGLE (127 aa)). The span at 532–551 (EGGGGGSGGGGRRCLSGGCG) shows a compositional bias: gly residues. Residues 582-606 (EEDEDDEEEEDEEEEEDEEEGEEGG) show a composition bias toward acidic residues. At Ser669 the chain carries Phosphoserine. The tract at residues 681–728 (RAGGEGRDQGPDGGPDPEPGSNSDSTRRQRRQNRSSWIDPPEEEHSPQ) is disordered. The helical transmembrane segment at 751 to 771 (MFVQFGYVVLFSSAFPLAALC) threads the bilayer. Residues 772–807 (ALVNNLIEIRSDAFKLCTGLQRPFGQRVESIGQWQK) lie on the Extracellular side of the membrane. Phosphoserine; by FAM20C is present on Ser801. A helical transmembrane segment spans residues 808-828 (VMEAMGVLAIVVNCYLIGQCG). Residues 829 to 841 (QLQRLFPWLSPEA) are Cytoplasmic-facing. Residues 842–862 (AIVSVVVLEHFALLLKYLIHV) form a helical membrane-spanning segment. At 863-1232 (AIPDIPGWVA…QAVCWPSGWH (370 aa)) the chain is on the extracellular side. Disordered regions lie at residues 888–970 (RHER…GSLL), 997–1152 (LAAA…WQWD), and 1174–1232 (PPCA…SGWH). Positions 904 to 932 (RREEEERQRHAEHHARREHDSGGREEARA) are enriched in basic and acidic residues. Low complexity-rich tracts occupy residues 933–953 (EGSG…AKGS) and 997–1006 (LAAAGAGATT). Arg1020 is modified (asymmetric dimethylarginine; alternate). The residue at position 1020 (Arg1020) is an Omega-N-methylarginine; alternate. Over residues 1031-1043 (KSPETRRDSERSH) the composition is skewed to basic and acidic residues. The segment covering 1078 to 1087 (TPSSGSSRVQ) has biased composition (polar residues). Composition is skewed to pro residues over residues 1130–1145 (PAPP…PTPP) and 1197–1221 (LPPP…PSPS).

This sequence belongs to the anoctamin family. Expressed in embryonic stem cells, fetal brain and neural tissues.

It localises to the cell membrane. In terms of biological role, does not exhibit calcium-activated chloride channel (CaCC) activity. The protein is Anoctamin-8 (ANO8) of Homo sapiens (Human).